The chain runs to 545 residues: Methionine--tRNA ligase (545 aa).

Residues Pro-15–His-25 carry the 'HIGH' region motif. Positions 146, 149, 159, and 162 each coordinate Zn(2+). A 'KMSKS' region motif is present at residues Lys-332–Ser-336. Residue Lys-335 participates in ATP binding.

It belongs to the class-I aminoacyl-tRNA synthetase family. MetG type 1 subfamily. As to quaternary structure, monomer. Zn(2+) is required as a cofactor.

The protein resides in the cytoplasm. The enzyme catalyses tRNA(Met) + L-methionine + ATP = L-methionyl-tRNA(Met) + AMP + diphosphate. Is required not only for elongation of protein synthesis but also for the initiation of all mRNA translation through initiator tRNA(fMet) aminoacylation. The protein is Methionine--tRNA ligase of Hamiltonella defensa subsp. Acyrthosiphon pisum (strain 5AT).